A 282-amino-acid polypeptide reads, in one-letter code: Bifunctional protein FolD 1 (282 aa).

NADP(+) contacts are provided by residues 167-169 (GRS) and Ser-192.

The protein belongs to the tetrahydrofolate dehydrogenase/cyclohydrolase family. In terms of assembly, homodimer.

It carries out the reaction (6R)-5,10-methylene-5,6,7,8-tetrahydrofolate + NADP(+) = (6R)-5,10-methenyltetrahydrofolate + NADPH. The enzyme catalyses (6R)-5,10-methenyltetrahydrofolate + H2O = (6R)-10-formyltetrahydrofolate + H(+). It participates in one-carbon metabolism; tetrahydrofolate interconversion. Functionally, catalyzes the oxidation of 5,10-methylenetetrahydrofolate to 5,10-methenyltetrahydrofolate and then the hydrolysis of 5,10-methenyltetrahydrofolate to 10-formyltetrahydrofolate. This chain is Bifunctional protein FolD 1, found in Colwellia psychrerythraea (strain 34H / ATCC BAA-681) (Vibrio psychroerythus).